A 267-amino-acid chain; its full sequence is Interleukin-15 receptor subunit alpha (267 aa).

The N-terminal stretch at 1-30 is a signal peptide; the sequence is MAPRRARGCRTLGLPALLLLLLLRPPATRG. Residues 31–95 enclose the Sushi domain; the sequence is ITCPPPMSVE…WTTPSLKCIR (65 aa). Residues 31-205 lie on the Extracellular side of the membrane; the sequence is ITCPPPMSVE…VYPQGHSDTT (175 aa). 2 disulfides stabilise this stretch: Cys-33–Cys-75 and Cys-59–Cys-93. Residues 102 to 178 are disordered; it reads QRPAPPSTVT…ESSHGTPSQT (77 aa). Positions 108–124 are enriched in polar residues; the sequence is STVTTAGVTPQPESLSP. A compositionally biased stretch (low complexity) spans 129-145; it reads PAASSPSSNNTAATTAA. N-linked (GlcNAc...) asparagine glycosylation occurs at Asn-137. The segment covering 152-165 has biased composition (polar residues); that stretch reads LMPSKSPSTGTTEI. Residues 206 to 228 form a helical membrane-spanning segment; it reads VAISTSTVLLCGLSAVSLLACYL. Residues 229-267 are Cytoplasmic-facing; sequence KSRQTPPLASVEMEAMEALPVTWGTSSRDEDLENCSHHL.

As to quaternary structure, the interleukin-15 receptor IL15R is a heterotrimer of IL15RA, IL2RB and IL2RG. IL15RA also self-associates. Interacts with SYK. In terms of processing, N-glycosylated and O-glycosylated. A soluble form (sIL-15RA) arises from proteolytic shedding of the membrane-anchored receptor. It also binds IL-15 and thus interferes with IL-15 binding to the membrane receptor. Expressed in neutrophils (at protein level). Expressed in fetal brain with higher expression in the hippocampus and cerebellum than in cortex and thalamus. Higher levels of soluble sIL-15RA form in comparison with membrane-bound forms is present in all brain structures. Isoforms 1, 3, 4, 5, 6, 7, 8 and 9: Widely expressed.

It is found in the membrane. The protein resides in the nucleus membrane. The protein localises to the cell surface. It localises to the endoplasmic reticulum membrane. Its subcellular location is the golgi apparatus membrane. It is found in the cytoplasmic vesicle membrane. The protein resides in the secreted. The protein localises to the extracellular space. High-affinity receptor for interleukin-15. Can signal both in cis and trans where IL15R from one subset of cells presents IL15 to neighboring IL2RG-expressing cells. In neutrophils, binds and activates kinase SYK in response to IL15 stimulation. In neutrophils, required for IL15-induced phagocytosis in a SYK-dependent manner. Expression of different isoforms may alter or interfere with signal transduction. Its function is as follows. Does not bind IL15. The chain is Interleukin-15 receptor subunit alpha (IL15RA) from Homo sapiens (Human).